We begin with the raw amino-acid sequence, 88 residues long: Small ribosomal subunit protein uS15 (88 aa).

This sequence belongs to the universal ribosomal protein uS15 family. In terms of assembly, part of the 30S ribosomal subunit. Forms a bridge to the 50S subunit in the 70S ribosome, contacting the 23S rRNA.

One of the primary rRNA binding proteins, it binds directly to 16S rRNA where it helps nucleate assembly of the platform of the 30S subunit by binding and bridging several RNA helices of the 16S rRNA. In terms of biological role, forms an intersubunit bridge (bridge B4) with the 23S rRNA of the 50S subunit in the ribosome. The polypeptide is Small ribosomal subunit protein uS15 (Geotalea daltonii (strain DSM 22248 / JCM 15807 / FRC-32) (Geobacter daltonii)).